The chain runs to 318 residues: Coproporphyrin III ferrochelatase (318 aa).

Residues His186 and Glu268 each contribute to the Fe(2+) site.

The protein belongs to the ferrochelatase family.

It is found in the cytoplasm. The enzyme catalyses Fe-coproporphyrin III + 2 H(+) = coproporphyrin III + Fe(2+). The protein operates within porphyrin-containing compound metabolism; protoheme biosynthesis. Its function is as follows. Involved in coproporphyrin-dependent heme b biosynthesis. Catalyzes the insertion of ferrous iron into coproporphyrin III to form Fe-coproporphyrin III. The polypeptide is Coproporphyrin III ferrochelatase (Lactococcus lactis subsp. cremoris (strain SK11)).